Reading from the N-terminus, the 217-residue chain is Ras-related protein RABA2d (217 aa).

Residue Gly-19–Thr-26 coordinates GTP. The Effector region motif lies at Ser-41–Phe-49. GTP contacts are provided by residues Asp-67–Gln-71, Asn-125–Asp-128, and Ser-155–Ala-156. The segment at Gly-196–Thr-217 is disordered. Residues Cys-214 and Cys-215 are each lipidated (S-geranylgeranyl cysteine).

Belongs to the small GTPase superfamily. Rab family. In terms of tissue distribution, expressed in root tips.

The protein localises to the endosome membrane. The protein resides in the golgi apparatus. Its subcellular location is the trans-Golgi network membrane. Intracellular vesicle trafficking and protein transport. In Arabidopsis thaliana (Mouse-ear cress), this protein is Ras-related protein RABA2d (RABA2D).